Reading from the N-terminus, the 208-residue chain is NADH-ubiquinone oxidoreductase chain 4 (208 aa).

The next 6 helical transmembrane spans lie at 23–43 (VWINVTTYSLLINLISINLLW), 60–80 (PLSAPLLVLTTWLLPLMLLAS), 93–113 (KLYISLLVCLQTLLIMTFSAN), 114–134 (ELIMFYILFEATLIPTLIIIT), 147–167 (IYFLFYTLVGSIPLLIALIYI), and 185–205 (PINQTWSNNILWLACIMAFMV).

Belongs to the complex I subunit 4 family. In terms of assembly, core subunit of respiratory chain NADH dehydrogenase (Complex I) which is composed of 45 different subunits.

It is found in the mitochondrion inner membrane. The catalysed reaction is a ubiquinone + NADH + 5 H(+)(in) = a ubiquinol + NAD(+) + 4 H(+)(out). In terms of biological role, core subunit of the mitochondrial membrane respiratory chain NADH dehydrogenase (Complex I) which catalyzes electron transfer from NADH through the respiratory chain, using ubiquinone as an electron acceptor. Essential for the catalytic activity and assembly of complex I. The protein is NADH-ubiquinone oxidoreductase chain 4 (MT-ND4) of Microtus pennsylvanicus (Meadow vole).